The following is a 417-amino-acid chain: uncharacterized protein (417 aa).

2 disordered regions span residues methionine 1 to alanine 41 and glutamine 233 to serine 262. A compositionally biased stretch (basic and acidic residues) spans aspartate 31 to alanine 41. Residues serine 235 to serine 245 show a composition bias toward polar residues.

This is an uncharacterized protein from Caenorhabditis elegans.